The sequence spans 182 residues: Nucleoside triphosphate/diphosphate phosphatase (182 aa).

The active-site Proton donor is R27. The Mg(2+) site is built by N91, D107, D109, D111, D124, and E127.

The protein belongs to the Ntdp family. It depends on Mg(2+) as a cofactor.

It carries out the reaction a ribonucleoside 5'-triphosphate + H2O = a ribonucleoside 5'-diphosphate + phosphate + H(+). The enzyme catalyses a ribonucleoside 5'-diphosphate + H2O = a ribonucleoside 5'-phosphate + phosphate + H(+). Has nucleoside phosphatase activity towards nucleoside triphosphates and nucleoside diphosphates. In Lactiplantibacillus plantarum (strain ATCC BAA-793 / NCIMB 8826 / WCFS1) (Lactobacillus plantarum), this protein is Nucleoside triphosphate/diphosphate phosphatase.